The primary structure comprises 482 residues: Butyrophilin-like protein 2 (482 aa).

The Cytoplasmic portion of the chain corresponds to 1–6; sequence MVDFPG. A helical; Signal-anchor for type II membrane protein transmembrane segment spans residues 7 to 23; sequence YNLSGAVASFLFILLTM. Residues 24 to 482 are Extracellular-facing; the sequence is KQSEDFRVIG…VAVGLPRKRS (459 aa). 3 Ig-like V-type domains span residues 29–140, 142–234, and 236–355; these read FRVI…LLLK, AGLG…SVIS, and PEKL…ASLD. Intrachain disulfides connect Cys-50–Cys-124, Cys-164–Cys-218, and Cys-267–Cys-341. Residue Asn-210 is glycosylated (N-linked (GlcNAc...) asparagine). Asn-427 is a glycosylation site (N-linked (GlcNAc...) asparagine).

It belongs to the immunoglobulin superfamily. BTN/MOG family. As to expression, expressed in brain, heart, kidney, liver, pancreas, ovary, leukocyte, small intestine, testis and thymus.

The protein resides in the membrane. Functionally, negative regulator of T-cell proliferation. In Homo sapiens (Human), this protein is Butyrophilin-like protein 2.